The primary structure comprises 201 residues: Imidazoleglycerol-phosphate dehydratase (201 aa).

The protein belongs to the imidazoleglycerol-phosphate dehydratase family.

Its subcellular location is the cytoplasm. It carries out the reaction D-erythro-1-(imidazol-4-yl)glycerol 3-phosphate = 3-(imidazol-4-yl)-2-oxopropyl phosphate + H2O. It functions in the pathway amino-acid biosynthesis; L-histidine biosynthesis; L-histidine from 5-phospho-alpha-D-ribose 1-diphosphate: step 6/9. This chain is Imidazoleglycerol-phosphate dehydratase, found in Prochlorococcus marinus (strain MIT 9515).